Here is an 890-residue protein sequence, read N- to C-terminus: Genome polyprotein 2 (890 aa).

Positions 135 to 255 (AFNFAHGYCY…NSDLLNGIVG (121 aa)) constitute a Peptidase C6 domain. Residues C143 and H215 each act as for helper component proteinase activity in the active site. Residues 506–533 (FTTSGDDDSPPPPGDSPSRPPGRSPDRV) form a disordered region. The segment covering 515 to 528 (PPPPGDSPSRPPGR) has biased composition (pro residues). The stretch at 788-816 (ELVQRSMTKLDKEIELFQAQIDSQRRAVT) forms a coiled coil.

It belongs to the bymoviruses polyprotein 2 family. Post-translationally, the viral RNA2 of bymoviruses is expressed as a single polyprotein which undergoes post-translational proteolytic processing resulting in the production of at least two individual proteins. The HC-pro cleaves its C-terminus autocatalytically (Potential).

It carries out the reaction Hydrolyzes a Gly-|-Gly bond at its own C-terminus, commonly in the sequence -Tyr-Xaa-Val-Gly-|-Gly, in the processing of the potyviral polyprotein.. This Hordeum vulgare (Barley) protein is Genome polyprotein 2.